The chain runs to 152 residues: MTRYKKVIAQNKKALFNYFIEERLEAGIVLKGSEVQSLRQGKASIEESYAGDTGHELFLYNCHIAEYEKANKFNHATRRPRKLLLHTKEMKKIIGKIKIKGYTLVALSMYFNKKNKVKVELGLAKGKKLYDKRESIKEKDWQRDQSRLIRQK.

This sequence belongs to the SmpB family.

Its subcellular location is the cytoplasm. In terms of biological role, required for rescue of stalled ribosomes mediated by trans-translation. Binds to transfer-messenger RNA (tmRNA), required for stable association of tmRNA with ribosomes. tmRNA and SmpB together mimic tRNA shape, replacing the anticodon stem-loop with SmpB. tmRNA is encoded by the ssrA gene; the 2 termini fold to resemble tRNA(Ala) and it encodes a 'tag peptide', a short internal open reading frame. During trans-translation Ala-aminoacylated tmRNA acts like a tRNA, entering the A-site of stalled ribosomes, displacing the stalled mRNA. The ribosome then switches to translate the ORF on the tmRNA; the nascent peptide is terminated with the 'tag peptide' encoded by the tmRNA and targeted for degradation. The ribosome is freed to recommence translation, which seems to be the essential function of trans-translation. This Rickettsia canadensis (strain McKiel) protein is SsrA-binding protein.